Here is a 287-residue protein sequence, read N- to C-terminus: ATP synthase gamma chain (287 aa).

It belongs to the ATPase gamma chain family. As to quaternary structure, F-type ATPases have 2 components, CF(1) - the catalytic core - and CF(0) - the membrane proton channel. CF(1) has five subunits: alpha(3), beta(3), gamma(1), delta(1), epsilon(1). CF(0) has three main subunits: a, b and c.

Its subcellular location is the cell inner membrane. In terms of biological role, produces ATP from ADP in the presence of a proton gradient across the membrane. The gamma chain is believed to be important in regulating ATPase activity and the flow of protons through the CF(0) complex. The protein is ATP synthase gamma chain of Shigella sonnei (strain Ss046).